A 654-amino-acid polypeptide reads, in one-letter code: Bifunctional polymyxin resistance protein ArnA (654 aa).

The tract at residues 1-303 (MKVIVFAYHE…NISRIKGKKL (303 aa)) is formyltransferase ArnAFT. H105 serves as the catalytic Proton donor; for formyltransferase activity. 137–141 (TKKID) is a (6R)-10-formyltetrahydrofolate binding site. The interval 313-654 (NLKKILILGV…INFFINNNTS (342 aa)) is dehydrogenase ArnADH. NAD(+) is bound by residues D346 and 367–368 (DI). UDP-alpha-D-glucuronate is bound by residues A392, Y397, and 431–432 (TS). The active-site Proton acceptor; for decarboxylase activity is the E433. UDP-alpha-D-glucuronate is bound by residues R459, N491, 532 to 534 (QKR), and Y612. The active-site Proton donor; for decarboxylase activity is R618.

The protein in the N-terminal section; belongs to the Fmt family. UDP-L-Ara4N formyltransferase subfamily. This sequence in the C-terminal section; belongs to the NAD(P)-dependent epimerase/dehydratase family. UDP-glucuronic acid decarboxylase subfamily. In terms of assembly, homohexamer, formed by a dimer of trimers.

The catalysed reaction is UDP-alpha-D-glucuronate + NAD(+) = UDP-beta-L-threo-pentopyranos-4-ulose + CO2 + NADH. It carries out the reaction UDP-4-amino-4-deoxy-beta-L-arabinose + (6R)-10-formyltetrahydrofolate = UDP-4-deoxy-4-formamido-beta-L-arabinose + (6S)-5,6,7,8-tetrahydrofolate + H(+). It functions in the pathway nucleotide-sugar biosynthesis; UDP-4-deoxy-4-formamido-beta-L-arabinose biosynthesis; UDP-4-deoxy-4-formamido-beta-L-arabinose from UDP-alpha-D-glucuronate: step 1/3. It participates in nucleotide-sugar biosynthesis; UDP-4-deoxy-4-formamido-beta-L-arabinose biosynthesis; UDP-4-deoxy-4-formamido-beta-L-arabinose from UDP-alpha-D-glucuronate: step 3/3. Its pathway is bacterial outer membrane biogenesis; lipopolysaccharide biosynthesis. Functionally, bifunctional enzyme that catalyzes the oxidative decarboxylation of UDP-glucuronic acid (UDP-GlcUA) to UDP-4-keto-arabinose (UDP-Ara4O) and the addition of a formyl group to UDP-4-amino-4-deoxy-L-arabinose (UDP-L-Ara4N) to form UDP-L-4-formamido-arabinose (UDP-L-Ara4FN). The modified arabinose is attached to lipid A and is required for resistance to polymyxin and cationic antimicrobial peptides. This is Bifunctional polymyxin resistance protein ArnA from Wigglesworthia glossinidia brevipalpis.